Reading from the N-terminus, the 459-residue chain is E3 ubiquitin-protein ligase RNF25 (459 aa).

One can recognise an RWD domain in the interval 18 to 128 (SEVEVLESIY…EKGKEILTDN (111 aa)). Positions 135, 138, 153, 155, 158, 161, 198, and 201 each coordinate Zn(2+). The segment at 135–202 (CVICLYGFQE…AVGVQCPVCR (68 aa)) adopts an RING-type zinc-finger fold. Disordered regions lie at residues 268–309 (PPAP…PPLP) and 322–459 (TRSN…KDGS). Polar residues predominate over residues 282–303 (KGSQPPSTLAAELSTSPAVQST). Composition is skewed to basic and acidic residues over residues 349-370 (QPERRHPKGGECHAPKGTRDTQ), 378-389 (PLKEPMDLKPEP), 413-424 (RTRDCVRWERSK), and 446-459 (TRRESLGLESKDGS). A Phosphoserine modification is found at Ser-450.

This sequence belongs to the RNF25 family. As to quaternary structure, interacts with UBE2D2, and may also interact with UBE2E1 and UBE2E3. Interacts with RELA/p65. Ubiquitinated; autoubiquitinated.

The protein localises to the cytoplasm. The catalysed reaction is S-ubiquitinyl-[E2 ubiquitin-conjugating enzyme]-L-cysteine + [acceptor protein]-L-lysine = [E2 ubiquitin-conjugating enzyme]-L-cysteine + N(6)-ubiquitinyl-[acceptor protein]-L-lysine.. It functions in the pathway protein modification; protein ubiquitination. Its function is as follows. E3 ubiquitin-protein ligase that plays a key role in the RNF14-RNF25 translation quality control pathway, a pathway that takes place when a ribosome has stalled during translation, and which promotes ubiquitination and degradation of translation factors on stalled ribosomes. Catalyzes ubiquitination of RPS27A in response to ribosome collisions, promoting activation of RNF14. RNF25 catalyzes ubiquitination of other ribosomal proteins on stalled ribosomes, such as RPL0, RPL1, RPL12, RPS13 and RPS17. Also involved in ubiquitination and degradation of stalled ETF1/eRF1. Independently of its function in the response to stalled ribosomes, mediates ubiquitination and subsequent proteasomal degradation of NKD2. May also stimulate transcription mediated by NF-kappa-B via its interaction with RELA/p65. This chain is E3 ubiquitin-protein ligase RNF25, found in Homo sapiens (Human).